Reading from the N-terminus, the 384-residue chain is S-adenosylmethionine synthase (384 aa).

Position 15 (His-15) interacts with ATP. Asp-17 provides a ligand contact to Mg(2+). Glu-43 provides a ligand contact to K(+). L-methionine contacts are provided by Glu-56 and Gln-99. The flexible loop stretch occupies residues 99 to 109 (QSADINQGVDR). ATP-binding positions include 164–166 (DAK), 230–231 (RF), Asp-239, 245–246 (RK), Ala-262, and Lys-266. Position 239 (Asp-239) interacts with L-methionine. Lys-270 serves as a coordination point for L-methionine.

It belongs to the AdoMet synthase family. As to quaternary structure, homotetramer; dimer of dimers. Mg(2+) serves as cofactor. The cofactor is K(+).

The protein resides in the cytoplasm. The enzyme catalyses L-methionine + ATP + H2O = S-adenosyl-L-methionine + phosphate + diphosphate. Its pathway is amino-acid biosynthesis; S-adenosyl-L-methionine biosynthesis; S-adenosyl-L-methionine from L-methionine: step 1/1. Catalyzes the formation of S-adenosylmethionine (AdoMet) from methionine and ATP. The overall synthetic reaction is composed of two sequential steps, AdoMet formation and the subsequent tripolyphosphate hydrolysis which occurs prior to release of AdoMet from the enzyme. The polypeptide is S-adenosylmethionine synthase (Haemophilus influenzae (strain PittGG)).